A 220-amino-acid chain; its full sequence is Glutathione S-transferase 2 (220 aa).

The region spanning 2-88 (VVTLGYWDIR…YIARKHNMCG (87 aa)) is the GST N-terminal domain. Residues 7 to 8 (YW), 43 to 46 (PSDW), lysine 50, 59 to 60 (NL), and 72 to 73 (QS) contribute to the glutathione site. The region spanning 90 to 208 (TEVEKQRVDV…RSGRFMKAPI (119 aa)) is the GST C-terminal domain. Tyrosine 116 provides a ligand contact to substrate.

This sequence belongs to the GST superfamily. Mu family. Homodimer.

The protein resides in the cytoplasm. The catalysed reaction is RX + glutathione = an S-substituted glutathione + a halide anion + H(+). Functionally, conjugation of reduced glutathione to a wide number of exogenous and endogenous hydrophobic electrophiles. Participates in the formation of novel hepoxilin regioisomers. This Gallus gallus (Chicken) protein is Glutathione S-transferase 2 (GSTM2).